Here is a 185-residue protein sequence, read N- to C-terminus: Protein E3 homolog (185 aa).

One can recognise a Z-binding domain in the interval 7-73 (TVNDAEIFSL…SNPPKWFKNY (67 aa)). The DRBM domain maps to 112-179 (NPCIVLNEYC…SKITMDEILD (68 aa)).

Belongs to the poxviridae E3 protein family.

Its function is as follows. RNA-binding protein that plays a role in the inhibition of multiple cellular antiviral responses activated by double-stranded RNA (dsRNA), such as inhibition of PKR activation, necroptosis, and IFN-mediated antiviral activities. Recognizes and binds Z-RNA structures via its Z-binding domain and dsRNA via its DRBM domain: RNA-binding activity is required to escape host ZBP1-dependent necroptosis. Mechanistically, the Z-binding domain binds Z-RNAs that are produced during Yaba-like disease virus infection, thereby competing with Z-RNA detection by host ZBP1, suppressing ZBP1-dependent necroptosis. The chain is Protein E3 homolog from Yaba-like disease virus (YLDV).